Reading from the N-terminus, the 226-residue chain is Transmembrane 4 L6 family member 20 (226 aa).

Residues 1–14 (MTCCEGWTSCNGFS) are Lumenal-facing. Residues 15 to 35 (LLILILLGVVINCIPLGISLV) form a helical membrane-spanning segment. The Cytoplasmic portion of the chain corresponds to 36–49 (EADSTSQNPISCYE). The helical transmembrane segment at 50-70 (WWFPGIIGAGLMAIPATTMSL) threads the bilayer. Residues 71–83 (AARKRACCNNKTG) are Lumenal-facing. The chain crosses the membrane as a helical span at residues 84–104 (MFLSSLFSVITVVGAVYCMLV). Residues 105–191 (SLQALLEGPL…RIFHFSVFMS (87 aa)) are Cytoplasmic-facing. Residues 192–212 (LLLVGILELLFGLSQILIGFL) form a helical membrane-spanning segment. Topologically, residues 213-226 (GCLCGVSQRRSQIV) are lumenal.

This sequence belongs to the L6 tetraspanin family. Glycosylated at Asn-132, Asn-148 and Asn-163 in presence of ceramide which inverts the orientation of TM4SF20 in membranes exposing these residues to the endoplasmic reticulum lumen. Post-translationally, cleaved by signal peptidase at Ser-14 but the peptide does not act as a signal peptide. Cleavage is inhibited by ceramide which inverts the orientation of TM4SF20 in membranes exposing the N-terminus to the cytosol and not to the endoplasmic reticulum lumen.

The protein localises to the membrane. It is found in the endoplasmic reticulum membrane. Polytopic transmembrane protein. Inhibits regulated intramembrane proteolysis (RIP) of CREB3L1, inhibiting its activation and the induction of collagen synthesis. In response to ceramide, which alters TM4SF20 membrane topology, stimulates RIP activation of CREB3L1. Ceramide reverses the direction through which transmembrane helices are translocated into the endoplasmic reticulum membrane during translation of TM4SF20, this mechanism is called 'regulated alternative translocation' (RAT) and regulates the function of the transmembrane protein. This chain is Transmembrane 4 L6 family member 20 (Tm4sf20), found in Mus musculus (Mouse).